The chain runs to 59 residues: Probable stress-associated endoplasmic reticulum protein (59 aa).

The disordered stretch occupies residues 1 to 30; sequence MSQSRTLRQKSQKYQENIEKRGVASPKKKE. Topologically, residues 1–34 are cytoplasmic; that stretch reads MSQSRTLRQKSQKYQENIEKRGVASPKKKEDGLN. Positions 16–30 are enriched in basic and acidic residues; that stretch reads ENIEKRGVASPKKKE. A helical; Anchor for type IV membrane protein membrane pass occupies residues 35 to 55; sequence INPYVLGFIIFVVVGSTLLQI. The Extracellular segment spans residues 56–59; it reads LKGQ.

It belongs to the RAMP4 family.

It is found in the membrane. The protein localises to the endoplasmic reticulum membrane. Functionally, may interact with target proteins during translocation into the lumen of the endoplasmic reticulum. May protect unfolded target proteins against degradation and facilitate correct glycosylation. The protein is Probable stress-associated endoplasmic reticulum protein (serp) of Dictyostelium discoideum (Social amoeba).